Here is a 137-residue protein sequence, read N- to C-terminus: Crustacean calcium-binding protein 23 (137 aa).

3 consecutive EF-hand domains span residues 27-48, 62-97, and 100-135; these read RDSS…FGLD, EKKA…KVVK, and ATEE…YSGL.

As to quaternary structure, monomer or disulfide-linked dimers.

Functionally, possibly acts as a regulatory protein and not as a calcium buffer or transport protein. This Homarus americanus (American lobster) protein is Crustacean calcium-binding protein 23.